A 505-amino-acid polypeptide reads, in one-letter code: RNA-splicing ligase RtcB homolog (505 aa).

Mn(2+) contacts are provided by aspartate 119, cysteine 122, histidine 227, and histidine 259. 226 to 230 (NHYAE) provides a ligand contact to GMP. Serine 300 carries the post-translational modification Phosphoserine. Histidine 353 is a binding site for Mn(2+). GMP is bound by residues 353–354 (HN), 402–405 (GGTM), serine 409, and 428–431 (HGAG). The GMP-histidine intermediate role is filled by histidine 428. Residue lysine 496 forms a Glycyl lysine isopeptide (Lys-Gly) (interchain with G-Cter in SUMO2) linkage. Lysine 504 provides a ligand contact to GMP.

Belongs to the RtcB family. As to quaternary structure, catalytic component of the tRNA-splicing ligase complex. Requires Mn(2+) as cofactor.

The protein localises to the nucleus. The protein resides in the cytoplasm. It carries out the reaction a 3'-end 3'-phospho-ribonucleotide-RNA + a 5'-end dephospho-ribonucleoside-RNA + GTP = a ribonucleotidyl-ribonucleotide-RNA + GMP + diphosphate. The enzyme catalyses a 3'-end 2',3'-cyclophospho-ribonucleotide-RNA + a 5'-end dephospho-ribonucleoside-RNA + GTP + H2O = a ribonucleotidyl-ribonucleotide-RNA + GMP + diphosphate + H(+). Its function is as follows. Catalytic subunit of the tRNA-splicing ligase complex that acts by directly joining spliced tRNA halves to mature-sized tRNAs by incorporating the precursor-derived splice junction phosphate into the mature tRNA as a canonical 3',5'-phosphodiester. May act as an RNA ligase with broad substrate specificity, and may function toward other RNAs. The chain is RNA-splicing ligase RtcB homolog from Bos taurus (Bovine).